The primary structure comprises 342 residues: Transmembrane protein 268 (342 aa).

The segment at 1-30 (MACEPQVDPGATGPLPPSSPGWSALPGGSP) is disordered. 2 helical membrane passes run 105-125 (AFAV…SQMF) and 132-152 (AGML…VLVF).

As to quaternary structure, interacts with ITGAM; this interaction inhibits ITGAM degradation via the endosome-lysosome pathway. Interacts with ITGB4; this interaction prevents ITGB4 degradation.

Its subcellular location is the cell membrane. In terms of biological role, stabilizes cell surface expression of ITGAM and participates in the adhesion and migration of phagocytes during bacterial clearance. The sequence is that of Transmembrane protein 268 from Homo sapiens (Human).